A 130-amino-acid polypeptide reads, in one-letter code: uncharacterized protein (130 aa).

This is an uncharacterized protein from Methanocaldococcus jannaschii (strain ATCC 43067 / DSM 2661 / JAL-1 / JCM 10045 / NBRC 100440) (Methanococcus jannaschii).